We begin with the raw amino-acid sequence, 315 residues long: Probable cytosolic iron-sulfur protein assembly protein CIAO1 homolog (315 aa).

WD repeat units lie at residues glycine 11–lysine 50, glycine 56–cysteine 95, glycine 100–cysteine 139, cysteine 145–aspartate 188, lysine 189–glutamate 229, arginine 236–arginine 275, and alanine 283–aspartate 315.

It belongs to the WD repeat CIA1 family.

Essential component of the cytosolic iron-sulfur (Fe/S) protein assembly machinery. Required for the maturation of extramitochondrial Fe/S proteins. This Ixodes scapularis (Black-legged tick) protein is Probable cytosolic iron-sulfur protein assembly protein CIAO1 homolog.